An 855-amino-acid polypeptide reads, in one-letter code: Leucine--tRNA ligase (855 aa).

The 'HIGH' region signature appears at 45–55 (PYPSGRLHMGH). A 'KMSKS' region motif is present at residues 619 to 623 (KMSKS). Lysine 622 contributes to the ATP binding site.

This sequence belongs to the class-I aminoacyl-tRNA synthetase family.

The protein localises to the cytoplasm. The enzyme catalyses tRNA(Leu) + L-leucine + ATP = L-leucyl-tRNA(Leu) + AMP + diphosphate. The polypeptide is Leucine--tRNA ligase (Hyphomonas neptunium (strain ATCC 15444)).